A 289-amino-acid polypeptide reads, in one-letter code: Formamidopyrimidine-DNA glycosylase (289 aa).

The active-site Schiff-base intermediate with DNA is proline 2. Catalysis depends on glutamate 3, which acts as the Proton donor. The Proton donor; for beta-elimination activity role is filled by lysine 60. DNA is bound by residues histidine 94, arginine 126, and arginine 167. The FPG-type zinc finger occupies 252-287 (QVYGKPAGTPCPRCGTGLARIRIAGRSSVFCPRCQP). Arginine 277 acts as the Proton donor; for delta-elimination activity in catalysis.

It belongs to the FPG family. In terms of assembly, monomer. Zn(2+) serves as cofactor.

It carries out the reaction Hydrolysis of DNA containing ring-opened 7-methylguanine residues, releasing 2,6-diamino-4-hydroxy-5-(N-methyl)formamidopyrimidine.. The catalysed reaction is 2'-deoxyribonucleotide-(2'-deoxyribose 5'-phosphate)-2'-deoxyribonucleotide-DNA = a 3'-end 2'-deoxyribonucleotide-(2,3-dehydro-2,3-deoxyribose 5'-phosphate)-DNA + a 5'-end 5'-phospho-2'-deoxyribonucleoside-DNA + H(+). Functionally, involved in base excision repair of DNA damaged by oxidation or by mutagenic agents. Acts as a DNA glycosylase that recognizes and removes damaged bases. Has a preference for oxidized purines, such as 7,8-dihydro-8-oxoguanine (8-oxoG). Has AP (apurinic/apyrimidinic) lyase activity and introduces nicks in the DNA strand. Cleaves the DNA backbone by beta-delta elimination to generate a single-strand break at the site of the removed base with both 3'- and 5'-phosphates. The protein is Formamidopyrimidine-DNA glycosylase of Thermomicrobium roseum (strain ATCC 27502 / DSM 5159 / P-2).